We begin with the raw amino-acid sequence, 218 residues long: MLSLQCLPPFFISVPNRSTNSCSTAPLRAVSDFAASPSTSISRRLILLRHAHSSWDDLSLRDHDRPLSKTGEADAAKVAQILSSLGWLPQLILSSDATRTRETLKSMQAQVDGFMEANVHFIPSFYSIAAMDGQTAEHLQNIISKYSTPDISTIMCMGHNKGWEEAASMLSGASIKLKTCNAALLQAFGNSWEEAFALSGPGGWKLEGLVAPDSSIFV.

A chloroplast-targeting transit peptide spans 1–28 (MLSLQCLPPFFISVPNRSTNSCSTAPLR).

This sequence belongs to the SixA phosphatase family.

The protein resides in the plastid. Its subcellular location is the chloroplast. This is an uncharacterized protein from Arabidopsis thaliana (Mouse-ear cress).